Consider the following 133-residue polypeptide: ATP synthase epsilon chain (133 aa).

This sequence belongs to the ATPase epsilon chain family. As to quaternary structure, F-type ATPases have 2 components, CF(1) - the catalytic core - and CF(0) - the membrane proton channel. CF(1) has five subunits: alpha(3), beta(3), gamma(1), delta(1), epsilon(1). CF(0) has three main subunits: a, b and c.

The protein localises to the cell membrane. Functionally, produces ATP from ADP in the presence of a proton gradient across the membrane. The chain is ATP synthase epsilon chain (atpC) from Mycoplasma pneumoniae (strain ATCC 29342 / M129 / Subtype 1) (Mycoplasmoides pneumoniae).